The primary structure comprises 224 residues: MHTTQKDTTYTKIFVGGLPYHTTDSSLRKYFEVFGDIEEAVVITDRQTGKSRGYGFVTMADRAAAERACKDPNPIIDGRKANVNLAYLGAKPRIMQPGFAFGVQQIHPALVQRPYGIPAHYVYPQAYVQQGLVIPHVQQTAAASTSPYIDYTSAAYAQYAAAAAAAYDQYPYAASPATTGYVTAAGYGYAVPQPLTAATPGTAAAAAAAFAQYQPQQLQADRMQ.

Residues 11–88 enclose the RRM domain; sequence TKIFVGGLPY…RKANVNLAYL (78 aa).

The protein resides in the nucleus. The protein localises to the cytoplasm. Its function is as follows. Multifunctional RNA-binding protein involved in the regulation of pre-mRNA splicing, mRNA stability and mRNA translation important for cell fate decision and differentiation. Plays a major role in pre-mRNA alternative splicing regulation. Mediates preferentially muscle-specific exon inclusion in numerous mRNAs important for striated cardiac and skeletal muscle cell differentiation. Binds to intronic splicing enhancer (ISE) composed of stretches of GU-rich motifs localized in flanking intron of exon that will be included by alternative splicing. Involved in embryonic stem cell (ESC) transition to cardiac cell differentiation by promoting pre-mRNA alternative splicing events of several pluripotency and/or differentiation genes. Plays a role in the regulation of mRNA stability and mRNA translation to which it is bound. Involved in myogenic differentiation by regulating myog levels. Binds to a huge amount of mRNAs. Required for embryonic heart development, sarcomer and M-band formation in striated muscles. This is RNA-binding protein 24-B (rbm24-b) from Xenopus laevis (African clawed frog).